A 376-amino-acid polypeptide reads, in one-letter code: Heat-inducible transcription repressor HrcA (376 aa).

Belongs to the HrcA family.

In terms of biological role, negative regulator of class I heat shock genes (grpE-dnaK-dnaJ and groELS operons). Prevents heat-shock induction of these operons. This Nostoc punctiforme (strain ATCC 29133 / PCC 73102) protein is Heat-inducible transcription repressor HrcA.